Here is a 354-residue protein sequence, read N- to C-terminus: Guanine nucleotide-binding protein G(i) subunit alpha-1 (354 aa).

Residue glycine 2 is the site of N-myristoyl glycine attachment. Cysteine 3 carries S-palmitoyl cysteine lipidation. A G-alpha domain is found at 32–354 (REVKLLLLGA…KNNLKDCGLF (323 aa)). The G1 motif stretch occupies residues 35-48 (KLLLLGAGESGKST). GTP-binding positions include 43–48 (ESGKST), 150–151 (DS), and 175–178 (LRTR). Serine 47 serves as a coordination point for Mg(2+). The tract at residues 173 to 181 (DVLRTRVKT) is G2 motif. Threonine 181 contributes to the Mg(2+) binding site. Residues 196–205 (FKMFDVGGQR) form a G3 motif region. GTP-binding positions include 200 to 204 (DVGGQ), 269 to 272 (NKKD), and alanine 326. Residues 265–272 (ILFLNKKD) form a G4 motif region. The G5 motif stretch occupies residues 324-329 (TCATDT).

It belongs to the G-alpha family. G(i/o/t/z) subfamily. As to quaternary structure, heterotrimeric G proteins are composed of 3 units; alpha, beta and gamma. The alpha chain contains the guanine nucleotide binding site. Part of a spindle orientation complex. Identified in complex with the beta subunit GNB1 and the gamma subunit GNG1. Identified in complex with the beta subunit GNB1 and the gamma subunit GNG2. GTP binding causes dissociation of the heterotrimer, liberating the individual subunits so that they can interact with downstream effector proteins. In terms of processing, myristoylation at Gly-2 is required for membrane anchoring before palmitoylation. Post-translationally, palmitoylation at Cys-3 varies with membrane lipid composition.

Its subcellular location is the nucleus. It localises to the cytoplasm. The protein localises to the cell membrane. The protein resides in the cytoskeleton. It is found in the microtubule organizing center. Its subcellular location is the centrosome. It localises to the cell cortex. The protein localises to the membrane. It catalyses the reaction GTP + H2O = GDP + phosphate + H(+). In terms of biological role, guanine nucleotide-binding proteins (G proteins) function as transducers downstream of G protein-coupled receptors (GPCRs) in numerous signaling cascades. The alpha chain contains the guanine nucleotide binding site and alternates between an active, GTP-bound state and an inactive, GDP-bound state. Signaling by an activated GPCR promotes GDP release and GTP binding. The alpha subunit has a low GTPase activity that converts bound GTP to GDP, thereby terminating the signal. Both GDP release and GTP hydrolysis are modulated by numerous regulatory proteins. Signaling is mediated via effector proteins, such as adenylate cyclase. Inhibits adenylate cyclase activity, leading to decreased intracellular cAMP levels. Required for cortical dynein-dynactin complex recruitment during metaphase. This Oryzias latipes (Japanese rice fish) protein is Guanine nucleotide-binding protein G(i) subunit alpha-1 (gnai1).